The chain runs to 217 residues: Large ribosomal subunit protein uL3 (217 aa).

The interval 129–161 is disordered; it reads SRGPMSHGSKNHRAPGSTGAGTTPGRIYPGKRM. Positions 142–153 are enriched in low complexity; sequence APGSTGAGTTPG.

Belongs to the universal ribosomal protein uL3 family. In terms of assembly, part of the 50S ribosomal subunit. Forms a cluster with proteins L14 and L19.

Its function is as follows. One of the primary rRNA binding proteins, it binds directly near the 3'-end of the 23S rRNA, where it nucleates assembly of the 50S subunit. This chain is Large ribosomal subunit protein uL3, found in Prochlorococcus marinus (strain MIT 9515).